We begin with the raw amino-acid sequence, 189 residues long: UPF0301 protein RMA_0049 (189 aa).

It belongs to the UPF0301 (AlgH) family.

The protein is UPF0301 protein RMA_0049 of Rickettsia massiliae (strain Mtu5).